Here is a 167-residue protein sequence, read N- to C-terminus: Single-stranded DNA-binding protein 2 (167 aa).

In terms of domain architecture, SSB spans 1 to 104; it reads MLNRVVLVGR…VVCDSVQFLE (104 aa). The disordered stretch occupies residues 107–167; sequence NAQQNGGQRQ…IDISDDDLPF (61 aa). Composition is skewed to low complexity over residues 109–118 and 132–147; these read QQNGGQRQQN and SGQN…TKQS. Residues 162 to 167 carry the Important for interaction with partner proteins motif; that stretch reads DDDLPF.

In terms of assembly, homotetramer.

Plays an important role in DNA replication, recombination and repair. Binds to ssDNA and to an array of partner proteins to recruit them to their sites of action during DNA metabolism. In Staphylococcus aureus (strain MSSA476), this protein is Single-stranded DNA-binding protein 2 (ssb2).